Reading from the N-terminus, the 302-residue chain is 4-hydroxy-tetrahydrodipicolinate synthase (302 aa).

T46 lines the pyruvate pocket. The active-site Proton donor/acceptor is the Y135. The active-site Schiff-base intermediate with substrate is the K164. V206 provides a ligand contact to pyruvate.

Belongs to the DapA family. In terms of assembly, homotetramer; dimer of dimers.

The protein localises to the cytoplasm. It catalyses the reaction L-aspartate 4-semialdehyde + pyruvate = (2S,4S)-4-hydroxy-2,3,4,5-tetrahydrodipicolinate + H2O + H(+). Its pathway is amino-acid biosynthesis; L-lysine biosynthesis via DAP pathway; (S)-tetrahydrodipicolinate from L-aspartate: step 3/4. Functionally, catalyzes the condensation of (S)-aspartate-beta-semialdehyde [(S)-ASA] and pyruvate to 4-hydroxy-tetrahydrodipicolinate (HTPA). In Acidobacterium capsulatum (strain ATCC 51196 / DSM 11244 / BCRC 80197 / JCM 7670 / NBRC 15755 / NCIMB 13165 / 161), this protein is 4-hydroxy-tetrahydrodipicolinate synthase.